The chain runs to 409 residues: Peptidase T (409 aa).

His-78 serves as a coordination point for Zn(2+). Asp-80 is a catalytic residue. Zn(2+) is bound at residue Asp-140. Glu-173 functions as the Proton acceptor in the catalytic mechanism. Glu-174, Asp-196, and His-379 together coordinate Zn(2+).

Belongs to the peptidase M20B family. Zn(2+) is required as a cofactor.

It localises to the cytoplasm. The catalysed reaction is Release of the N-terminal residue from a tripeptide.. Cleaves the N-terminal amino acid of tripeptides. This chain is Peptidase T, found in Salmonella heidelberg (strain SL476).